The chain runs to 119 residues: Large ribosomal subunit protein uL24 (119 aa).

The protein belongs to the universal ribosomal protein uL24 family. In terms of assembly, part of the 50S ribosomal subunit.

Functionally, one of two assembly initiator proteins, it binds directly to the 5'-end of the 23S rRNA, where it nucleates assembly of the 50S subunit. In terms of biological role, one of the proteins that surrounds the polypeptide exit tunnel on the outside of the subunit. The polypeptide is Large ribosomal subunit protein uL24 (Clavibacter michiganensis subsp. michiganensis (strain NCPPB 382)).